A 310-amino-acid polypeptide reads, in one-letter code: Ribosomal RNA small subunit methyltransferase H (310 aa).

Residues 33–35, Asp52, Phe79, Asp98, and Gln105 contribute to the S-adenosyl-L-methionine site; that span reads GGH.

Belongs to the methyltransferase superfamily. RsmH family.

The protein resides in the cytoplasm. The enzyme catalyses cytidine(1402) in 16S rRNA + S-adenosyl-L-methionine = N(4)-methylcytidine(1402) in 16S rRNA + S-adenosyl-L-homocysteine + H(+). Specifically methylates the N4 position of cytidine in position 1402 (C1402) of 16S rRNA. This is Ribosomal RNA small subunit methyltransferase H from Campylobacter jejuni subsp. jejuni serotype O:6 (strain 81116 / NCTC 11828).